We begin with the raw amino-acid sequence, 465 residues long: Asparagine--tRNA ligase (465 aa).

This sequence belongs to the class-II aminoacyl-tRNA synthetase family. In terms of assembly, homodimer.

It localises to the cytoplasm. It carries out the reaction tRNA(Asn) + L-asparagine + ATP = L-asparaginyl-tRNA(Asn) + AMP + diphosphate + H(+). This is Asparagine--tRNA ligase from Hahella chejuensis (strain KCTC 2396).